Reading from the N-terminus, the 61-residue chain is Small ribosomal subunit protein uS14 (61 aa).

Cys-24, Cys-27, Cys-40, and Cys-43 together coordinate Zn(2+).

Belongs to the universal ribosomal protein uS14 family. Zinc-binding uS14 subfamily. As to quaternary structure, part of the 30S ribosomal subunit. Contacts proteins S3 and S10. Zn(2+) is required as a cofactor.

In terms of biological role, binds 16S rRNA, required for the assembly of 30S particles and may also be responsible for determining the conformation of the 16S rRNA at the A site. This is Small ribosomal subunit protein uS14 from Campylobacter curvus (strain 525.92).